A 251-amino-acid polypeptide reads, in one-letter code: MTNQNMPPETPIIWLNFSPALRRFDRPLLRQLGKSQAILQWDYHQTADEPNCLTVGLDLIGEYLENFHQPVHLIGHSTSGLLALLYARQCPEKVRSLSLLSVGVYPALDWQAHYYSQFDAMRYSRHLLLGQMAHHLFNCRSLRQTQTIVNILENDLLTSISPHSLYKQLIILPNHIAVPLLVAVGETDGIIDTSLFNGWQRWKKPGDRLWLCPEGKYFFQFEHPEITAFQLQQFWRSLQGQEASSSTSLLA.

The protein to Anabaena PCC 7120 alr2406.

This is an uncharacterized protein from Synechocystis sp. (strain ATCC 27184 / PCC 6803 / Kazusa).